A 213-amino-acid chain; its full sequence is Endonuclease III (213 aa).

The region spanning 108-127 is the HhH domain; sequence FKELIKLPGVGRKTANVVLN. Residues C187, C194, C197, and C203 each coordinate [4Fe-4S] cluster.

This sequence belongs to the Nth/MutY family. Requires [4Fe-4S] cluster as cofactor.

It catalyses the reaction 2'-deoxyribonucleotide-(2'-deoxyribose 5'-phosphate)-2'-deoxyribonucleotide-DNA = a 3'-end 2'-deoxyribonucleotide-(2,3-dehydro-2,3-deoxyribose 5'-phosphate)-DNA + a 5'-end 5'-phospho-2'-deoxyribonucleoside-DNA + H(+). Its function is as follows. DNA repair enzyme that has both DNA N-glycosylase activity and AP-lyase activity. The DNA N-glycosylase activity releases various damaged pyrimidines from DNA by cleaving the N-glycosidic bond, leaving an AP (apurinic/apyrimidinic) site. The AP-lyase activity cleaves the phosphodiester bond 3' to the AP site by a beta-elimination, leaving a 3'-terminal unsaturated sugar and a product with a terminal 5'-phosphate. The sequence is that of Endonuclease III from Rickettsia felis (strain ATCC VR-1525 / URRWXCal2) (Rickettsia azadi).